Here is a 261-residue protein sequence, read N- to C-terminus: tRNA pseudouridine synthase A (261 aa).

Residue Asp-51 is the Nucleophile of the active site. Residue Tyr-109 coordinates substrate.

This sequence belongs to the tRNA pseudouridine synthase TruA family. As to quaternary structure, homodimer.

The enzyme catalyses uridine(38/39/40) in tRNA = pseudouridine(38/39/40) in tRNA. Functionally, formation of pseudouridine at positions 38, 39 and 40 in the anticodon stem and loop of transfer RNAs. The sequence is that of tRNA pseudouridine synthase A from Shewanella baltica (strain OS185).